Consider the following 417-residue polypeptide: Serine hydroxymethyltransferase (417 aa).

Residues leucine 121 and 125–127 (GHL) contribute to the (6S)-5,6,7,8-tetrahydrofolate site. An N6-(pyridoxal phosphate)lysine modification is found at lysine 229. 355–357 (SPF) provides a ligand contact to (6S)-5,6,7,8-tetrahydrofolate.

The protein belongs to the SHMT family. Homodimer. It depends on pyridoxal 5'-phosphate as a cofactor.

It localises to the cytoplasm. It catalyses the reaction (6R)-5,10-methylene-5,6,7,8-tetrahydrofolate + glycine + H2O = (6S)-5,6,7,8-tetrahydrofolate + L-serine. The protein operates within one-carbon metabolism; tetrahydrofolate interconversion. Its pathway is amino-acid biosynthesis; glycine biosynthesis; glycine from L-serine: step 1/1. In terms of biological role, catalyzes the reversible interconversion of serine and glycine with tetrahydrofolate (THF) serving as the one-carbon carrier. This reaction serves as the major source of one-carbon groups required for the biosynthesis of purines, thymidylate, methionine, and other important biomolecules. Also exhibits THF-independent aldolase activity toward beta-hydroxyamino acids, producing glycine and aldehydes, via a retro-aldol mechanism. The protein is Serine hydroxymethyltransferase of Buchnera aphidicola subsp. Baizongia pistaciae (strain Bp).